The primary structure comprises 355 residues: IgG receptor FcRn large subunit p51 (355 aa).

A signal peptide spans 1–24; it reads MRVPRSQPWGLALLLLLLPGTLRA. Residues 25–111 form an alpha-1 region; it reads AESHRSLLYH…ALKVFGDRDS (87 aa). Residues 25–300 are Extracellular-facing; the sequence is AESHRSLLYH…LESPAKSSVP (276 aa). The alpha-2 stretch occupies residues 112–201; sequence YTLQGLLGCE…ERGRGNLEWK (90 aa). Asparagine 126 carries an N-linked (GlcNAc...) asparagine glycan. The interval 202–291 is alpha-3; sequence EPPSMRLKAR…GPAQPLTVEL (90 aa). The 90-residue stretch at 203 to 292 folds into the Ig-like C1-type domain; it reads PPSMRLKARP…PAQPLTVELE (90 aa). Cysteine 222 and cysteine 276 form a disulfide bridge. Residues 293-298 are connecting peptide; it reads SPAKSS. A helical transmembrane segment spans residues 301 to 321; it reads VIGISIGFLLLMTVAAGGALL. Residues 322-355 are Cytoplasmic-facing; it reads WRRRKGLPAPWIAFRGDDIGALLPTPGLSKDAES.

Belongs to the immunoglobulin superfamily. In terms of assembly, fcRn complex consists of two subunits: p51, and p14 which is equivalent to beta-2-microglobulin. It forms an MHC class I-like heterodimer. Interacts with albumin/ALB; this interaction regulates ALB homeostasis. As to expression, expressed in liver and mammary gland of non-lactating animals. Expressed in hepatocytes and in epithelial cells of portal bile ductuli. Not expressed in the brances of portal veins or hepatic arteries. Expressed in the epithelial cells of the acini and ducti in the mammary gland with expression emphasized at the apical side. Not expressed in blood vessels of mammary gland.

It is found in the cell membrane. The protein localises to the endosome membrane. Functionally, cell surface receptor that transfers passive humoral immunity from the mother to the newborn. Binds to the Fc region of monomeric immunoglobulin gamma and mediates its selective uptake from milk. IgG in the milk is bound at the apical surface of the intestinal epithelium. The resultant FcRn-IgG complexes are transcytosed across the intestinal epithelium and IgG is released from FcRn into blood or tissue fluids. Throughout life, contributes to effective humoral immunity by recycling IgG and extending its half-life in the circulation. Mechanistically, monomeric IgG binding to FcRn in acidic endosomes of endothelial and hematopoietic cells recycles IgG to the cell surface where it is released into the circulation. In addition of IgG, regulates homeostasis of the other most abundant circulating protein albumin/ALB. This Camelus dromedarius (Dromedary) protein is IgG receptor FcRn large subunit p51.